Reading from the N-terminus, the 353-residue chain is Protein MGF 360-10L (353 aa).

Residues 57 to 89 (DLNTALMLATKENNYQLIKLFTEWGADINYGLI) form an ANK repeat. N-linked (GlcNAc...) asparagine; by host glycosylation occurs at Asn-172. Transmembrane regions (helical) follow at residues 206 to 228 (LNTW…NLYE) and 249 to 271 (NFLT…IASI). Asn-342 carries an N-linked (GlcNAc...) asparagine; by host glycan.

Belongs to the asfivirus MGF 360 family.

It is found in the host membrane. Functionally, plays a role in virus cell tropism, and may be required for efficient virus replication in macrophages. In African swine fever virus (isolate Warthog/Namibia/Wart80/1980) (ASFV), this protein is Protein MGF 360-10L.